The primary structure comprises 168 residues: ATP synthase subunit b, chloroplastic (168 aa).

The chain crosses the membrane as a helical span at residues 20–37 (LNLAVVLPIVFTLGRDTL).

It belongs to the ATPase B chain family. In terms of assembly, F-type ATPases have 2 components, F(1) - the catalytic core - and F(0) - the membrane proton channel. F(1) has five subunits: alpha(3), beta(3), gamma(1), delta(1), epsilon(1). F(0) has four main subunits: a(1), b(1), b'(1) and c(10-14). The alpha and beta chains form an alternating ring which encloses part of the gamma chain. F(1) is attached to F(0) by a central stalk formed by the gamma and epsilon chains, while a peripheral stalk is formed by the delta, b and b' chains.

It localises to the plastid. It is found in the chloroplast thylakoid membrane. In terms of biological role, f(1)F(0) ATP synthase produces ATP from ADP in the presence of a proton or sodium gradient. F-type ATPases consist of two structural domains, F(1) containing the extramembraneous catalytic core and F(0) containing the membrane proton channel, linked together by a central stalk and a peripheral stalk. During catalysis, ATP synthesis in the catalytic domain of F(1) is coupled via a rotary mechanism of the central stalk subunits to proton translocation. Component of the F(0) channel, it forms part of the peripheral stalk, linking F(1) to F(0). The sequence is that of ATP synthase subunit b, chloroplastic from Ostreococcus tauri.